The sequence spans 397 residues: Tryptophan synthase beta chain (397 aa).

K91 carries the post-translational modification N6-(pyridoxal phosphate)lysine.

Belongs to the TrpB family. In terms of assembly, tetramer of two alpha and two beta chains. Pyridoxal 5'-phosphate serves as cofactor.

It catalyses the reaction (1S,2R)-1-C-(indol-3-yl)glycerol 3-phosphate + L-serine = D-glyceraldehyde 3-phosphate + L-tryptophan + H2O. It participates in amino-acid biosynthesis; L-tryptophan biosynthesis; L-tryptophan from chorismate: step 5/5. The beta subunit is responsible for the synthesis of L-tryptophan from indole and L-serine. This chain is Tryptophan synthase beta chain, found in Bacillus cereus (strain Q1).